We begin with the raw amino-acid sequence, 315 residues long: Phosphatidylglycerol--prolipoprotein diacylglyceryl transferase (315 aa).

The next 2 helical transmembrane spans lie at 19-39 (FTIHMYAICILIGICVAVWIL) and 93-113 (VWEGGMAIFGGISVGTLVAFL). An a 1,2-diacyl-sn-glycero-3-phospho-(1'-sn-glycerol)-binding site is contributed by R141. 2 helical membrane-spanning segments follow: residues 188–208 (LFHPTFLYEMIWNLIGAALII) and 256–276 (VWTAIIVFVLGCILFVVLYQY).

The protein belongs to the Lgt family.

It localises to the cell membrane. The enzyme catalyses L-cysteinyl-[prolipoprotein] + a 1,2-diacyl-sn-glycero-3-phospho-(1'-sn-glycerol) = an S-1,2-diacyl-sn-glyceryl-L-cysteinyl-[prolipoprotein] + sn-glycerol 1-phosphate + H(+). It functions in the pathway protein modification; lipoprotein biosynthesis (diacylglyceryl transfer). In terms of biological role, catalyzes the transfer of the diacylglyceryl group from phosphatidylglycerol to the sulfhydryl group of the N-terminal cysteine of a prolipoprotein, the first step in the formation of mature lipoproteins. This chain is Phosphatidylglycerol--prolipoprotein diacylglyceryl transferase, found in Bifidobacterium longum (strain DJO10A).